We begin with the raw amino-acid sequence, 222 residues long: Capsular polysaccharide type 5 biosynthesis protein cap5A (222 aa).

A run of 2 helical transmembrane segments spans residues 20–40 (ILII…FFVL) and 172–192 (VVNL…YIFF).

This sequence belongs to the CpsC/CapA family.

The protein resides in the cell membrane. Functionally, required for the biosynthesis of type 5 capsular polysaccharide (Cap5/CP5). Might act as the chain-length regulator. The chain is Capsular polysaccharide type 5 biosynthesis protein cap5A (cap5A) from Staphylococcus aureus (strain Newman).